Reading from the N-terminus, the 179-residue chain is Bifunctional protein PyrR (179 aa).

Positions 97–109 (VILIDDVLFTGRT) match the PRPP-binding motif.

It belongs to the purine/pyrimidine phosphoribosyltransferase family. PyrR subfamily.

It carries out the reaction UMP + diphosphate = 5-phospho-alpha-D-ribose 1-diphosphate + uracil. Regulates the transcription of the pyrimidine nucleotide (pyr) operon in response to exogenous pyrimidines. Functionally, also displays a weak uracil phosphoribosyltransferase activity which is not physiologically significant. This chain is Bifunctional protein PyrR, found in Actinobacillus pleuropneumoniae serotype 5b (strain L20).